A 510-amino-acid polypeptide reads, in one-letter code: Inositol-3-phosphate synthase (510 aa).

Positions 70, 71, 72, 73, 143, 180, 190, 193, 230, 231, 232, 233, 281, 282, 306, 309, 340, 341, 342, 355, 393, 394, 422, and 423 each coordinate NAD(+).

Belongs to the myo-inositol 1-phosphate synthase family. NAD(+) is required as a cofactor.

It is found in the cytoplasm. The protein localises to the cytosol. It localises to the nucleus. It carries out the reaction D-glucose 6-phosphate = 1D-myo-inositol 3-phosphate. The protein operates within polyol metabolism; myo-inositol biosynthesis; myo-inositol from D-glucose 6-phosphate: step 1/2. Functionally, key enzyme in myo-inositol biosynthesis pathway that catalyzes the conversion of glucose 6-phosphate to 1-myo-inositol 1-phosphate in a NAD-dependent manner. The sequence is that of Inositol-3-phosphate synthase from Zea mays (Maize).